Here is a 285-residue protein sequence, read N- to C-terminus: Short chain dehydrogenase sol3 (285 aa).

NADP(+)-binding residues include L39, K64, and D87. Catalysis depends on proton donor residues S168 and Y200. NADP(+) contacts are provided by Y200, K204, and S234. K204 acts as the Lowers pKa of active site Tyr in catalysis.

This sequence belongs to the short-chain dehydrogenases/reductases (SDR) family.

Its pathway is phytotoxin biosynthesis. Its function is as follows. Short chain dehydrogenase; part of the gene cluster that mediates the biosynthesis of the phytotoxin solanapyrone, a causal agent of early blight disease of potato and tomato. The prosolanapyrone synthase sol1 is a polyketide synthase that produces the octaketide desmethylprosolanapyrone I via sequential condensations of 7 malonyl-CoA units with one acetyl-CoA unit, and one methylation step. The octaketide backbone is further methylated by the sol2 O-methyltransferase to yield prosolanapyrone I. Prosolanapyrone I is hydroxylated to prosolanapyrone II by the cytochrome P450 monooxygenase sol6. The solanapyrone synthase sol5 then catalyzes the oxidation of prosolanapyrone II and the subsequent Diels Alder cycloisomerization of the product prosolanapyrone III to solanapyrones A and D. Solanapyrones A and D are then converted into solanapyrones B and E, respectively, by the sol3 dehydrogenase. The chain is Short chain dehydrogenase sol3 (sol3) from Alternaria solani.